A 652-amino-acid chain; its full sequence is tRNA 5-methylaminomethyl-2-thiouridine biosynthesis bifunctional protein MnmC (652 aa).

Residues 1–227 are tRNA (mnm(5)s(2)U34)-methyltransferase; that stretch reads MLSWKNDLTP…KREMLTGKYS (227 aa). The tract at residues 259-652 is FAD-dependent cmnm(5)s(2)U34 oxidoreductase; it reads IGAGIAGSTL…ARFLYRRIRK (394 aa).

This sequence in the N-terminal section; belongs to the methyltransferase superfamily. tRNA (mnm(5)s(2)U34)-methyltransferase family. The protein in the C-terminal section; belongs to the DAO family. The cofactor is FAD.

Its subcellular location is the cytoplasm. The catalysed reaction is 5-aminomethyl-2-thiouridine(34) in tRNA + S-adenosyl-L-methionine = 5-methylaminomethyl-2-thiouridine(34) in tRNA + S-adenosyl-L-homocysteine + H(+). Catalyzes the last two steps in the biosynthesis of 5-methylaminomethyl-2-thiouridine (mnm(5)s(2)U) at the wobble position (U34) in tRNA. Catalyzes the FAD-dependent demodification of cmnm(5)s(2)U34 to nm(5)s(2)U34, followed by the transfer of a methyl group from S-adenosyl-L-methionine to nm(5)s(2)U34, to form mnm(5)s(2)U34. This chain is tRNA 5-methylaminomethyl-2-thiouridine biosynthesis bifunctional protein MnmC, found in Leptospira borgpetersenii serovar Hardjo-bovis (strain JB197).